Here is a 567-residue protein sequence, read N- to C-terminus: CTD small phosphatase-like protein 2 (567 aa).

Disordered regions lie at residues 31–53 (QQQQ…HQCE), 100–150 (ASST…FSSV), and 280–361 (NKEN…EEFN). Low complexity-rich tracts occupy residues 100–118 (ASST…SPLK), 130–150 (SMND…FSSV), and 286–297 (ESNNSNSNSNSS). Residues 298-308 (PSFFHNLQQHP) are compositionally biased toward polar residues. A compositionally biased stretch (low complexity) spans 309–332 (TSAATTTTTTTTTITTTSATTSII). Over residues 337-360 (NSDDEIDDECDDESEEEEEDEEEF) the composition is skewed to acidic residues. The 159-residue stretch at 386-544 (HSSPKISLVL…LQLVPFLESL (159 aa)) folds into the FCP1 homology domain.

Belongs to the CTDSPL2 family.

Its function is as follows. Probable phosphatase. This chain is CTD small phosphatase-like protein 2 (ctdspl2), found in Dictyostelium discoideum (Social amoeba).